Reading from the N-terminus, the 186-residue chain is Ribosome maturation factor RimM (186 aa).

In terms of domain architecture, PRC barrel spans 100–182 (NEGEYHVSDL…RIEINPPVGL (83 aa)).

It belongs to the RimM family. As to quaternary structure, binds ribosomal protein uS19.

Its subcellular location is the cytoplasm. In terms of biological role, an accessory protein needed during the final step in the assembly of 30S ribosomal subunit, possibly for assembly of the head region. Essential for efficient processing of 16S rRNA. May be needed both before and after RbfA during the maturation of 16S rRNA. It has affinity for free ribosomal 30S subunits but not for 70S ribosomes. This Rippkaea orientalis (strain PCC 8801 / RF-1) (Cyanothece sp. (strain PCC 8801)) protein is Ribosome maturation factor RimM.